A 208-amino-acid polypeptide reads, in one-letter code: LexA repressor (208 aa).

A DNA-binding region (H-T-H motif) is located at residues 29–49; the sequence is VREICSAVGLSSTSTVHGHIS. Residues Ser-129 and Lys-167 each act as for autocatalytic cleavage activity in the active site.

Belongs to the peptidase S24 family. Homodimer.

It catalyses the reaction Hydrolysis of Ala-|-Gly bond in repressor LexA.. Represses a number of genes involved in the response to DNA damage (SOS response), including recA and lexA. In the presence of single-stranded DNA, RecA interacts with LexA causing an autocatalytic cleavage which disrupts the DNA-binding part of LexA, leading to derepression of the SOS regulon and eventually DNA repair. This is LexA repressor from Limosilactobacillus reuteri (strain DSM 20016) (Lactobacillus reuteri).